The chain runs to 432 residues: Trigger factor (432 aa).

In terms of domain architecture, PPIase FKBP-type spans 161–246 (EDRVTIDFTG…LKKVEERELP (86 aa)).

It belongs to the FKBP-type PPIase family. Tig subfamily. In terms of assembly, homodimer and monomer. In vivo most of the ribosomes are in complex with monomeric TF. Uncomplexed TF, however, is in a monomer-dimer equilibrium with approximately two thirds of TF existing in a dimeric state.

The protein resides in the cytoplasm. It catalyses the reaction [protein]-peptidylproline (omega=180) = [protein]-peptidylproline (omega=0). Functionally, involved in protein export. Acts as a chaperone by maintaining the newly synthesized protein in an open conformation. Functions as a peptidyl-prolyl cis-trans isomerase. The chain is Trigger factor from Shigella boydii serotype 18 (strain CDC 3083-94 / BS512).